Consider the following 37-residue polypeptide: Large ribosomal subunit protein bL36c (37 aa).

This sequence belongs to the bacterial ribosomal protein bL36 family.

The protein localises to the plastid. It localises to the chloroplast. This is Large ribosomal subunit protein bL36c from Huperzia lucidula (Shining clubmoss).